We begin with the raw amino-acid sequence, 63 residues long: Eumenitin VP1 (63 aa).

Positions 1 to 22 are cleaved as a signal peptide; sequence MRGTSFILFAVVVILGFLHANA. AXPX repeat units follow at residues 22 to 25, 26 to 29, 32 to 35, 40 to 43, and 44 to 47; these read AEPL, ANPA, ANPD, ADPL, and ADPE. The propeptide occupies 23–48; it reads EPLANPAPLANPDPLANADPLADPEA.

In terms of tissue distribution, expressed by the venom gland.

The protein resides in the secreted. The protein localises to the target cell membrane. In terms of biological role, antimicrobial peptide with activities against the fungi B.cinerea (MIC=5 uM) and C.albicans (MIC=100 uM), the Gram-negative bacterium E.coli (MIC=25 uM) and the Gram-positive bacterium S.aureus (MIC=100 uM). Shows cytolytic activity against insect cell lines. Has no hemolytic activity against human erythrocytes. In vivo, peptide injection in the vicinity of the head and thorax of lepidopteran larvae induces feeding disorder followed by death due to starvation. This chain is Eumenitin VP1, found in Eumenes pomiformis (Potter wasp).